Here is a 297-residue protein sequence, read N- to C-terminus: Urease accessory protein UreD 2 (297 aa).

The protein belongs to the UreD family. UreD, UreF and UreG form a complex that acts as a GTP-hydrolysis-dependent molecular chaperone, activating the urease apoprotein by helping to assemble the nickel containing metallocenter of UreC. The UreE protein probably delivers the nickel.

It is found in the cytoplasm. In terms of biological role, required for maturation of urease via the functional incorporation of the urease nickel metallocenter. The polypeptide is Urease accessory protein UreD 2 (Methylorubrum populi (strain ATCC BAA-705 / NCIMB 13946 / BJ001) (Methylobacterium populi)).